The following is a 258-amino-acid chain: Transcription factor RSL3 (258 aa).

The D-box signature appears at 98 to 105; it reads RKLLDVEN. The interval 119–178 is disordered; it reads ELAKSKKKQRVSSESNTVDESNTNWVDGQSLSNSSDDEKASVTSVKGKTRATKGTATDPQ. Positions 130 to 152 are enriched in polar residues; the sequence is SSESNTVDESNTNWVDGQSLSNS. The segment at 173–186 is basic motif; the sequence is TATDPQSLYARKRR. Positions 173–222 constitute a bHLH domain; it reads TATDPQSLYARKRREKINERLKTLQNLVPNGTKVDISTMLEEAVHYVKFL. Residues 187-222 form a helix-loop-helix motif region; it reads EKINERLKTLQNLVPNGTKVDISTMLEEAVHYVKFL.

In terms of assembly, homodimer. In terms of processing, ubiquitinated. Ubiquitination leads to its subsequent degradation by the 26S proteasome. Expressed constitutively in roots, leaves, and flowers. Expressed in root epidermal hair cells.

It localises to the nucleus. Its function is as follows. Transcription factor involved in the regulation of root hair elongation. Is sufficient to promote postmitotic cell growth in root-hair cells and is a direct transcriptional target of RHD6 and RSL1. Involved in the regulation of root hair elongation in response to low phosphate. Controls root hair cell growth by regulating the expression of genes encoding proteins involved in cell signaling, cell wall modification and secretion. In Arabidopsis thaliana (Mouse-ear cress), this protein is Transcription factor RSL3.